The primary structure comprises 59 residues: Large ribosomal subunit protein uL30 (59 aa).

The protein belongs to the universal ribosomal protein uL30 family. As to quaternary structure, part of the 50S ribosomal subunit.

This is Large ribosomal subunit protein uL30 from Leptospira interrogans serogroup Icterohaemorrhagiae serovar copenhageni (strain Fiocruz L1-130).